A 379-amino-acid polypeptide reads, in one-letter code: Sperm microtubule associated protein 2 (379 aa).

Residues Met1–Glu82 form a disordered region. Basic and acidic residues-rich tracts occupy residues Gly19 to Pro29 and Glu38 to Leu50. Residues Gly56–Glu76 show a composition bias toward acidic residues. THEG repeat units follow at residues Lys118–Asn137, Thr184–Phe203, Ser222–Arg241, Ala258–Pro277, Pro290–Gln309, and Val326–Arg345. A Phosphoserine modification is found at Ser295. The segment at Val344–Leu379 is disordered. Composition is skewed to basic and acidic residues over residues Gly347–Pro356 and Ser368–Leu379.

As to quaternary structure, interacts with CCT5. As to expression, testis specific.

It is found in the nucleus. In terms of biological role, may be involved (but not essential) in spermatogenesis. In Homo sapiens (Human), this protein is Sperm microtubule associated protein 2.